The primary structure comprises 200 residues: NADH-quinone oxidoreductase subunit C 1 (200 aa).

Belongs to the complex I 30 kDa subunit family. NDH-1 is composed of 14 different subunits. Subunits NuoB, C, D, E, F, and G constitute the peripheral sector of the complex.

Its subcellular location is the cell inner membrane. It catalyses the reaction a quinone + NADH + 5 H(+)(in) = a quinol + NAD(+) + 4 H(+)(out). NDH-1 shuttles electrons from NADH, via FMN and iron-sulfur (Fe-S) centers, to quinones in the respiratory chain. The immediate electron acceptor for the enzyme in this species is believed to be ubiquinone. Couples the redox reaction to proton translocation (for every two electrons transferred, four hydrogen ions are translocated across the cytoplasmic membrane), and thus conserves the redox energy in a proton gradient. The chain is NADH-quinone oxidoreductase subunit C 1 from Rhizobium etli (strain CIAT 652).